We begin with the raw amino-acid sequence, 122 residues long: Large ribosomal subunit protein uL14 (122 aa).

Belongs to the universal ribosomal protein uL14 family. In terms of assembly, part of the 50S ribosomal subunit. Forms a cluster with proteins L3 and L19. In the 70S ribosome, L14 and L19 interact and together make contacts with the 16S rRNA in bridges B5 and B8.

Functionally, binds to 23S rRNA. Forms part of two intersubunit bridges in the 70S ribosome. The protein is Large ribosomal subunit protein uL14 of Paraburkholderia phytofirmans (strain DSM 17436 / LMG 22146 / PsJN) (Burkholderia phytofirmans).